A 194-amino-acid chain; its full sequence is Fe/S biogenesis protein NfuA (194 aa).

Positions 151 and 154 each coordinate [4Fe-4S] cluster.

It belongs to the NfuA family. In terms of assembly, homodimer. [4Fe-4S] cluster serves as cofactor.

Its function is as follows. Involved in iron-sulfur cluster biogenesis. Binds a 4Fe-4S cluster, can transfer this cluster to apoproteins, and thereby intervenes in the maturation of Fe/S proteins. Could also act as a scaffold/chaperone for damaged Fe/S proteins. The chain is Fe/S biogenesis protein NfuA from Aliivibrio fischeri (strain ATCC 700601 / ES114) (Vibrio fischeri).